The following is a 185-amino-acid chain: Elongation factor P (185 aa).

It belongs to the elongation factor P family.

It is found in the cytoplasm. The protein operates within protein biosynthesis; polypeptide chain elongation. Functionally, involved in peptide bond synthesis. Stimulates efficient translation and peptide-bond synthesis on native or reconstituted 70S ribosomes in vitro. Probably functions indirectly by altering the affinity of the ribosome for aminoacyl-tRNA, thus increasing their reactivity as acceptors for peptidyl transferase. The chain is Elongation factor P from Mesomycoplasma hyopneumoniae (strain 7448) (Mycoplasma hyopneumoniae).